We begin with the raw amino-acid sequence, 334 residues long: Glyceraldehyde-3-phosphate dehydrogenase 1 (334 aa).

Residues 11-12 (RI), Asp-33, Arg-77, and Ser-119 contribute to the NAD(+) site. D-glyceraldehyde 3-phosphate-binding positions include 150–152 (SCT) and Thr-181. Cys-151 serves as the catalytic Nucleophile. Asn-182 contributes to the NAD(+) binding site. D-glyceraldehyde 3-phosphate is bound by residues Arg-196, 209 to 210 (TG), and Arg-232. Asn-314 contacts NAD(+).

The protein belongs to the glyceraldehyde-3-phosphate dehydrogenase family. Homotetramer.

It is found in the cytoplasm. It catalyses the reaction D-glyceraldehyde 3-phosphate + phosphate + NAD(+) = (2R)-3-phospho-glyceroyl phosphate + NADH + H(+). The protein operates within carbohydrate degradation; glycolysis; pyruvate from D-glyceraldehyde 3-phosphate: step 1/5. Functionally, catalyzes the oxidative phosphorylation of glyceraldehyde 3-phosphate (G3P) to 1,3-bisphosphoglycerate (BPG) using the cofactor NAD. The first reaction step involves the formation of a hemiacetal intermediate between G3P and a cysteine residue, and this hemiacetal intermediate is then oxidized to a thioester, with concomitant reduction of NAD to NADH. The reduced NADH is then exchanged with the second NAD, and the thioester is attacked by a nucleophilic inorganic phosphate to produce BPG. In Bacillus cereus, this protein is Glyceraldehyde-3-phosphate dehydrogenase 1 (gap1).